The sequence spans 526 residues: 3-hydroxy-3-methylglutaryl-coenzyme A reductase 2 (526 aa).

Active-site charge relay system residues include E193, K325, and D401. H499 acts as the Proton donor in catalysis. The disordered stretch occupies residues 503-526 (NRKTEAPAPQADTISMTHNLPHSD). Polar residues predominate over residues 514–526 (DTISMTHNLPHSD).

This sequence belongs to the HMG-CoA reductase family.

It carries out the reaction (R)-mevalonate + 2 NADP(+) + CoA = (3S)-3-hydroxy-3-methylglutaryl-CoA + 2 NADPH + 2 H(+). Its pathway is metabolic intermediate biosynthesis; (R)-mevalonate biosynthesis; (R)-mevalonate from acetyl-CoA: step 3/3. In terms of biological role, this transmembrane glycoprotein is involved in the control of cholesterol biosynthesis. It is the rate-limiting enzyme of the sterol biosynthesis. The protein is 3-hydroxy-3-methylglutaryl-coenzyme A reductase 2 (hmgB) of Dictyostelium discoideum (Social amoeba).